The following is a 274-amino-acid chain: Dermonecrotic toxin LcsSicTox-betaIC1 (274 aa).

His-5 is a catalytic residue. Residues Glu-25 and Asp-27 each coordinate Mg(2+). Catalysis depends on His-41, which acts as the Nucleophile. 2 disulfide bridges follow: Cys-45–Cys-51 and Cys-47–Cys-190. Residue Asn-66 is glycosylated (N-linked (GlcNAc...) asparagine). Residue Asp-85 participates in Mg(2+) binding.

This sequence belongs to the arthropod phospholipase D family. Class II subfamily. Mg(2+) is required as a cofactor. Expressed by the venom gland.

Its subcellular location is the secreted. The catalysed reaction is an N-(acyl)-sphingosylphosphocholine = an N-(acyl)-sphingosyl-1,3-cyclic phosphate + choline. It carries out the reaction an N-(acyl)-sphingosylphosphoethanolamine = an N-(acyl)-sphingosyl-1,3-cyclic phosphate + ethanolamine. The enzyme catalyses a 1-acyl-sn-glycero-3-phosphocholine = a 1-acyl-sn-glycero-2,3-cyclic phosphate + choline. It catalyses the reaction a 1-acyl-sn-glycero-3-phosphoethanolamine = a 1-acyl-sn-glycero-2,3-cyclic phosphate + ethanolamine. Its function is as follows. Dermonecrotic toxins cleave the phosphodiester linkage between the phosphate and headgroup of certain phospholipids (sphingolipid and lysolipid substrates), forming an alcohol (often choline) and a cyclic phosphate. This toxin acts on sphingomyelin (SM). It may also act on ceramide phosphoethanolamine (CPE), lysophosphatidylcholine (LPC) and lysophosphatidylethanolamine (LPE), but not on lysophosphatidylserine (LPS), and lysophosphatidylglycerol (LPG). It acts by transphosphatidylation, releasing exclusively cyclic phosphate products as second products. Induces dermonecrosis, hemolysis, increased vascular permeability, edema, inflammatory response, and platelet aggregation. This is Dermonecrotic toxin LcsSicTox-betaIC1 from Loxosceles cf. spinulosa (strain GJB-2008) (Recluse spider).